A 507-amino-acid polypeptide reads, in one-letter code: Cobyric acid synthase (507 aa).

One can recognise a GATase cobBQ-type domain in the interval 249-451; the sequence is DIEIAVINLP…IHGIFENREF (203 aa). The active-site Nucleophile is Cys330. The active site involves His443.

It belongs to the CobB/CobQ family. CobQ subfamily.

Its pathway is cofactor biosynthesis; adenosylcobalamin biosynthesis. Functionally, catalyzes amidations at positions B, D, E, and G on adenosylcobyrinic A,C-diamide. NH(2) groups are provided by glutamine, and one molecule of ATP is hydrogenolyzed for each amidation. This is Cobyric acid synthase from Thermoanaerobacter sp. (strain X514).